A 312-amino-acid chain; its full sequence is tRNA dimethylallyltransferase (312 aa).

Position 11 to 18 (11 to 18 (GLTATGKT)) interacts with ATP. 13–18 (TATGKT) provides a ligand contact to substrate. The interaction with substrate tRNA stretch occupies residues 36-39 (DSMC).

It belongs to the IPP transferase family. Monomer. Mg(2+) is required as a cofactor.

The catalysed reaction is adenosine(37) in tRNA + dimethylallyl diphosphate = N(6)-dimethylallyladenosine(37) in tRNA + diphosphate. In terms of biological role, catalyzes the transfer of a dimethylallyl group onto the adenine at position 37 in tRNAs that read codons beginning with uridine, leading to the formation of N6-(dimethylallyl)adenosine (i(6)A). The sequence is that of tRNA dimethylallyltransferase from Caldicellulosiruptor bescii (strain ATCC BAA-1888 / DSM 6725 / KCTC 15123 / Z-1320) (Anaerocellum thermophilum).